We begin with the raw amino-acid sequence, 210 residues long: Silenced mating-type protein ALPHA2 (210 aa).

M1 carries the post-translational modification N-acetylmethionine. Positions 1–102 (MNKIPIKDLL…RSIENDRSNY (102 aa)) are N-terminal domain. Residues 103 to 128 (QLTQKNKSADGLVFNVVTQDMINKST) form a flexible linker region. A DNA-binding region (homeobox; TALE-type) is located at residues 129–191 (KPYRGHRFTK…NRRRKEKTIT (63 aa)). The tract at residues 190–210 (ITIAPELADLLSGEPLAKKKE) is C-terminal tail.

Belongs to the TALE/M-ATYP homeobox family.

Its subcellular location is the nucleus. Functionally, mating type proteins are sequence specific DNA-binding proteins that act as master switches in yeast differentiation by controlling gene expression in a cell type-specific fashion. Silenced copy of ALPHA2 at HML. This chain is Silenced mating-type protein ALPHA2 (HMLALPHA2), found in Saccharomyces cerevisiae (strain ATCC 204508 / S288c) (Baker's yeast).